The primary structure comprises 59 residues: Potassium channel toxin alpha-KTx 16.2 (59 aa).

Positions 1–22 (MKIFSILLVALIICSISICTEA) are cleaved as a signal peptide. 3 disulfide bridges follow: cysteine 30/cysteine 51, cysteine 36/cysteine 56, and cysteine 40/cysteine 58.

The protein belongs to the short scorpion toxin superfamily. Potassium channel inhibitor family. Alpha-KTx 16 subfamily. In terms of tissue distribution, expressed by the venom gland.

The protein localises to the secreted. Alpha-KTx 16.2: inhibits large conductance calcium-activated potassium channels (KCa1.1/Slo-beta4 KCNMA1/KCNMB4). It appears to block channel activity by a simple bimolecular inhibition process. Shows a fast association rate and a slow dissociation rate of binding on rat brain synaptosome. Significantly inhibits voltage-dependent sodium current and voltage-dependent delayed rectifier potassium currents. Its function is as follows. Significantly inhibits voltage-dependent sodium current (Nav) and voltage-dependent delayed rectifier potassium current. This is Potassium channel toxin alpha-KTx 16.2 from Olivierus martensii (Manchurian scorpion).